The sequence spans 312 residues: Deoxyribonuclease Tat-D (312 aa).

The a divalent metal cation site is built by glutamate 124, histidine 161, histidine 187, and aspartate 235.

This sequence belongs to the metallo-dependent hydrolases superfamily. TatD-type hydrolase family. Requires a divalent metal cation as cofactor.

It localises to the cytoplasm. The protein localises to the nucleus. Has both endo- and exonuclease activities. Incises double-stranded DNA without obvious specificity via its endonuclease activity and excises the DNA from the 3'-to 5'-end by its exonuclease activity. May have a role in apoptosis. This Schizosaccharomyces pombe (strain 972 / ATCC 24843) (Fission yeast) protein is Deoxyribonuclease Tat-D.